We begin with the raw amino-acid sequence, 341 residues long: GDP-mannose transporter GONST5 (341 aa).

Transmembrane regions (helical) follow at residues 17-37 (LSIL…KWIF), 44-64 (FPLS…YIVI), 89-109 (FVFC…PVSF), 141-161 (LVPI…FNVF), 192-212 (INTV…PAFL), 233-253 (IILF…FYVI), 260-280 (TFNV…WMIF), and 284-304 (ISPM…FYGY). The EamA domain maps to 33–152 (NKWIFQKLDF…PIVGGILLTS (120 aa)).

Belongs to the TPT transporter family. TPT (TC 2.A.7.9) subfamily. In terms of tissue distribution, expressed in rosette leaves, flowers and siliques.

Its subcellular location is the golgi apparatus membrane. Functionally, GDP-mannose transporter that may be involved in the import of GDP-mannose from the cytoplasm into the Golgi lumen. This is GDP-mannose transporter GONST5 (GONST5) from Arabidopsis thaliana (Mouse-ear cress).